Consider the following 440-residue polypeptide: Ran-specific GTPase-activating protein 30 (440 aa).

In terms of domain architecture, RanBD1 spans 1-314; it reads MDEILAKAGS…LVLKIDRSDD (314 aa). At Thr-272 the chain carries Phosphothreonine. Over residues 341–371 the composition is skewed to acidic residues; the sequence is IEEDEEEDEEEDEEEGKDGEERKEEEEEENK. Residues 341 to 375 are disordered; sequence IEEDEEEDEEEDEEEGKDGEERKEEEEEENKLEDK.

In terms of assembly, interacts with GSP1.

It localises to the cytoplasm. The protein resides in the nucleus. Its function is as follows. Important for the export of protein containing nuclear export signal (NES) out of the nucleus. Stimulates the GTPase activity of GSP1. This is Ran-specific GTPase-activating protein 30 (YRB30) from Saccharomyces cerevisiae (strain ATCC 204508 / S288c) (Baker's yeast).